A 37-amino-acid chain; its full sequence is Large ribosomal subunit protein bL36c (37 aa).

It belongs to the bacterial ribosomal protein bL36 family.

It localises to the plastid. Its subcellular location is the chloroplast. This is Large ribosomal subunit protein bL36c from Staurastrum punctulatum (Green alga).